Reading from the N-terminus, the 75-residue chain is Conotoxin TsMEKL-011 (75 aa).

An N-terminal signal peptide occupies residues Met-1–Ala-19. Residues Leu-20–Arg-45 constitute a propeptide that is removed on maturation. Cystine bridges form between Cys-49–Cys-63, Cys-56–Cys-67, and Cys-62–Cys-71.

This sequence belongs to the conotoxin O2 superfamily. In terms of tissue distribution, expressed by the venom duct.

It localises to the secreted. This Conus tessulatus (Tessellate cone) protein is Conotoxin TsMEKL-011.